Reading from the N-terminus, the 345-residue chain is Trace amine-associated receptor 6 (345 aa).

Residues 1 to 32 (MGSNSSPPTVLQLCYENVTGSCVKTPYSPGSR) lie on the Extracellular side of the membrane. N-linked (GlcNAc...) asparagine glycosylation occurs at asparagine 17. 2 disulfides stabilise this stretch: cysteine 22-cysteine 186 and cysteine 105-cysteine 190. Residues 33–53 (VILYAVFGFGAVLAVFGNLMV) form a helical membrane-spanning segment. Over 54–68 (MISILHFKQLHSPTN) the chain is Cytoplasmic. A helical transmembrane segment spans residues 69 to 89 (FLIASLACADFGVGISVMPFS). The Extracellular portion of the chain corresponds to 90–107 (MVRSIESCWYFGRSFCTF). The helical transmembrane segment at 108–128 (HTCCDVAFCYSSLFHLSFISI) threads the bilayer. At 129 to 147 (DRYIAVTDPLVYPTKFTVS) the chain is on the cytoplasmic side. The helical transmembrane segment at 148 to 168 (VSGICIGVSWILPLVYSGAVF) threads the bilayer. The Extracellular portion of the chain corresponds to 169–202 (YTGVYDDGLEELSSALNCVGGCQVVVNQNWVLID). An extracellular Loop 2 (ECL2) region spans residues 174-187 (DDGLEELSSALNCV). Residues 203-223 (FLSFLIPTLVMIILYGNIFLV) traverse the membrane as a helical segment. Over 224 to 259 (ARQQAKKIENIGSKTESSSESYKARVARRERKAAKT) the chain is Cytoplasmic. The helical transmembrane segment at 260-276 (LGITVVAFMISWLPYSI) threads the bilayer. Residues 277 to 282 (DSLVDA) lie on the Extracellular side of the membrane. A helical transmembrane segment spans residues 283-302 (FMGFITPAYIYEICVWCAYY). Over 303–345 (NSAMNPLIYALFYPWFKKAIKVIMSGQVFKNSSATMNLFSEQI) the chain is Cytoplasmic.

It belongs to the G-protein coupled receptor 1 family. In terms of tissue distribution, specifically expressed in neurons of the olfactory epithelium, to discrete glomeruli predominantly localized to a confined bulb region. Present in a ventral area of the main olfactory epithelium.

The protein resides in the cell membrane. Functionally, olfactory receptor specific for trace amines, such as beta-phenylethylamine (beta-PEA). Trace amine compounds are enriched in animal body fluids and act on trace amine-associated receptors (TAARs) to elicit both intraspecific and interspecific innate behaviors. Beta-PEA-binding causes a conformation change that triggers signaling via G(s)-class of G alpha proteins (GNAL or GNAS). The sequence is that of Trace amine-associated receptor 6 from Mus musculus (Mouse).